The following is a 365-amino-acid chain: Peptide chain release factor 1 (365 aa).

N5-methylglutamine is present on Gln240.

This sequence belongs to the prokaryotic/mitochondrial release factor family. In terms of processing, methylated by PrmC. Methylation increases the termination efficiency of RF1.

It is found in the cytoplasm. Functionally, peptide chain release factor 1 directs the termination of translation in response to the peptide chain termination codons UAG and UAA. The chain is Peptide chain release factor 1 from Bifidobacterium animalis subsp. lactis (strain AD011).